A 165-amino-acid chain; its full sequence is Chorismate pyruvate-lyase (165 aa).

Positions 35, 77, 115, and 156 each coordinate substrate.

The protein belongs to the UbiC family. In terms of assembly, monomer.

The protein resides in the cytoplasm. It catalyses the reaction chorismate = 4-hydroxybenzoate + pyruvate. It participates in cofactor biosynthesis; ubiquinone biosynthesis. In terms of biological role, removes the pyruvyl group from chorismate, with concomitant aromatization of the ring, to provide 4-hydroxybenzoate (4HB) for the ubiquinone pathway. The protein is Chorismate pyruvate-lyase of Salmonella agona (strain SL483).